Reading from the N-terminus, the 614-residue chain is MASNKVIGIDLGTTNSAVAVMEGGKPKIITNPDGSRTTPSVVAFKNGEIQVGEVAKRQEITNPNTVRSIKSHMGEEGYTVDIDGKKYTPQQISAMILQYIKGYAEDYLGDTVSEAVITVPAYFNDAQRQATKDAGKIAGLDVKRIINEPTAAALAYGLDKQDKDEKILVYDLGGGTFDVSVLELGDGVFQVLSTNGDTHLGGDDFDQRIIDYLVAEFKKENGVDLAQDKMALQRLKDAAEKAKKELSGVNQTEISLPFIASNDNGPLHLQTTLTRAKFNELTHDLVEKTKIPFENALKDAGLSTSDIDEVILNGGSTRIPAVQEAVKEWSGKEPNHSINPDEAVALGAAVQGGVLTGDVKDVVLLDVTPLSLGIETMGGVMTKLIEKNTTIPTSKSQTFSTAADNQTAVDIHVLQGERPMAADNKSLGRFQLTDIPAAPRGIPQIEVTFDIDKNGIVNVSAKDKGTGKEQKITIKDSNGLSDEEIEKMMNEAKANEEADKKKKEEVDLNNEVDQLIFQTDKTLKDVEGKVSEDEIKGVKDAEEELKKAKADGNLDDMKAKKDTLNEKVQAVAVKLYQQQQSQGGEAGAANGDASKKDDNTVDGDFHEVHDDDKK.

T176 bears the Phosphothreonine; by autocatalysis mark. The tract at residues 576-614 (YQQQQSQGGEAGAANGDASKKDDNTVDGDFHEVHDDDKK) is disordered. Residues 577–589 (QQQQSQGGEAGAA) are compositionally biased toward low complexity. Positions 593 to 614 (ASKKDDNTVDGDFHEVHDDDKK) are enriched in basic and acidic residues.

Belongs to the heat shock protein 70 family.

Its function is as follows. Acts as a chaperone. This is Chaperone protein DnaK from Fructilactobacillus sanfranciscensis (Lactobacillus sanfranciscensis).